Here is a 122-residue protein sequence, read N- to C-terminus: MKLLTGLVFCSLVLGVSSRSFFSFLGEAFDGARDMWRAYSDMREANYIGSDKYFHARGNYDAAKRGPGGAWAAEVITDARENIQRFFGHGAEDSLADQAANEWGRSGKDPNHFRPAGLPEKY.

Residues 1-18 (MKLLTGLVFCSLVLGVSS) form the signal peptide. Positions 19-45 (RSFFSFLGEAFDGARDMWRAYSDMREA) are important for amyloid formation; forms amyloid fibrils in vitro. A propeptide spans 95-122 (LADQAANEWGRSGKDPNHFRPAGLPEKY) (often cleaved during amyloidogenesis). A disordered region spans residues 98–122 (QAANEWGRSGKDPNHFRPAGLPEKY). Position 101 is an N4,N4-dimethylasparagine (N101).

This sequence belongs to the SAA family. As to quaternary structure, homohexamer; dimer of trimers. Can form amyloid fibrils after partial proteolysis; the native, undenatured protein does not form amyloid fibrils (in vitro). Apolipoprotein of the HDL complex. Binds to heparin. In terms of processing, this protein is the precursor of amyloid protein A, which is formed by the removal of approximately 24 residues from the C-terminal end. In terms of tissue distribution, expressed by the liver; secreted in plasma (at protein level).

It is found in the secreted. Its function is as follows. Major acute phase protein. The polypeptide is Serum amyloid A-1 protein (SAA1) (Homo sapiens (Human)).